A 437-amino-acid polypeptide reads, in one-letter code: GTPase Obg (437 aa).

Positions 2 to 160 (SMFLDTAKIS…RQLELELKIL (159 aa)) constitute an Obg domain. One can recognise an OBG-type G domain in the interval 161–338 (ADVGLVGFPS…LLEATAELLA (178 aa)). GTP contacts are provided by residues 167-174 (GFPSVGKS), 192-196 (FTTIV), 214-217 (DLPG), 284-287 (NKMD), and 319-321 (SSL). Mg(2+) is bound by residues Ser174 and Thr194. In terms of domain architecture, OCT spans 359–437 (GFAEAEKDFE…IGKFEFEFVD (79 aa)).

Belongs to the TRAFAC class OBG-HflX-like GTPase superfamily. OBG GTPase family. Monomer. The cofactor is Mg(2+).

It is found in the cytoplasm. In terms of biological role, an essential GTPase which binds GTP, GDP and possibly (p)ppGpp with moderate affinity, with high nucleotide exchange rates and a fairly low GTP hydrolysis rate. Plays a role in control of the cell cycle, stress response, ribosome biogenesis and in those bacteria that undergo differentiation, in morphogenesis control. This is GTPase Obg from Streptococcus pyogenes serotype M18 (strain MGAS8232).